We begin with the raw amino-acid sequence, 187 residues long: UPF0301 protein YqgE (187 aa).

Belongs to the UPF0301 (AlgH) family.

The polypeptide is UPF0301 protein YqgE (Salmonella paratyphi B (strain ATCC BAA-1250 / SPB7)).